The chain runs to 911 residues: Protein argonaute 4B (911 aa).

Disordered stretches follow at residues Met1–Leu51 and Lys149–Arg171. Positions Pro281 to Pro396 constitute a PAZ domain. Residues Phe565–Lys872 form the Piwi domain.

It belongs to the argonaute family. Ago subfamily.

Probably involved in the RNA silencing pathway. May bind to short RNAs such as microRNAs (miRNAs) or short interfering RNAs (siRNAs), and represses the translation of mRNAs which are complementary to them. This is Protein argonaute 4B (AGO4B) from Oryza sativa subsp. japonica (Rice).